We begin with the raw amino-acid sequence, 457 residues long: Bifunctional F420 biosynthesis protein FbiB (457 aa).

The segment at 1 to 253 (MTSSDSHRSA…NGPDDLFWLG (253 aa)) is coenzyme F420:L-glutamate ligase. GTP is bound by residues 29–32 (LPEF), Ser-59, and Lys-64. Asp-118 provides a ligand contact to a divalent metal cation. Asn-121 contacts GTP. Residues Asp-159 and Thr-160 each coordinate a divalent metal cation. Positions 254 to 457 (TTEALELGRQ…VRVADLLLRK (204 aa)) are dehydro-coenzyme F420-0 reductase. FMN contacts are provided by residues 269–273 (RRSVR) and Ala-297. Asp-329 contacts coenzyme F420-(gamma-Glu)n. Residues Gly-408 and Arg-445 each contribute to the FMN site.

The protein in the N-terminal section; belongs to the CofE family. The cofactor is Mg(2+). Mn(2+) serves as cofactor. Requires K(+) as cofactor.

It catalyses the reaction oxidized coenzyme F420-0 + GTP + L-glutamate = oxidized coenzyme F420-1 + GDP + phosphate + H(+). The catalysed reaction is oxidized coenzyme F420-1 + GTP + L-glutamate = oxidized coenzyme F420-2 + GDP + phosphate + H(+). It carries out the reaction oxidized coenzyme F420-(gamma-L-Glu)(n) + GTP + L-glutamate = oxidized coenzyme F420-(gamma-L-Glu)(n+1) + GDP + phosphate + H(+). The enzyme catalyses oxidized coenzyme F420-0 + FMN + H(+) = dehydro coenzyme F420-0 + FMNH2. It participates in cofactor biosynthesis; coenzyme F420 biosynthesis. Functionally, bifunctional enzyme that catalyzes the GTP-dependent successive addition of multiple gamma-linked L-glutamates to the L-lactyl phosphodiester of 7,8-didemethyl-8-hydroxy-5-deazariboflavin (F420-0) to form polyglutamated F420 derivatives, and the FMNH2-dependent reduction of dehydro-F420-0 to form F420-0. In Mycobacterium leprae (strain TN), this protein is Bifunctional F420 biosynthesis protein FbiB.